Consider the following 290-residue polypeptide: Glycine--tRNA ligase alpha subunit (290 aa).

It belongs to the class-II aminoacyl-tRNA synthetase family. Tetramer of two alpha and two beta subunits.

The protein localises to the cytoplasm. The catalysed reaction is tRNA(Gly) + glycine + ATP = glycyl-tRNA(Gly) + AMP + diphosphate. This chain is Glycine--tRNA ligase alpha subunit, found in Syntrophobacter fumaroxidans (strain DSM 10017 / MPOB).